Reading from the N-terminus, the 2039-residue chain is Methylcytosine dioxygenase TET1 (2039 aa).

Over residues 1–19 (MSRSRPAKPSKSVKTKLQK) the composition is skewed to basic residues. 3 disordered regions span residues 1–79 (MSRS…AGAA), 119–168 (VVTP…NGEQ), and 227–286 (DNEC…GFPD). Basic and acidic residues-rich tracts occupy residues 53 to 65 (KRRD…EDKT) and 138 to 149 (IQDEPGVKHSEN). Composition is skewed to polar residues over residues 150 to 168 (DSVP…NGEQ) and 241 to 265 (QRST…SQVE). Residues 512–657 (LDLTQGSQAA…NGPKSESMDC (146 aa)) form a sufficient for binding to genomic CpG islands region. Residues 567–608 (ERRKRKACGVCEPCQQKANCGECTYCKNRKNSHQICKKRKCE) form a CXXC-type zinc finger. Zn(2+) contacts are provided by C574, C577, C580, C586, C589, C592, C602, and C607. 8 disordered regions span residues 613 to 670 (KPEA…QRLD), 711 to 735 (CDAN…NPSP), 820 to 859 (GAEP…VQPS), 882 to 906 (QLSE…HQKT), 964 to 993 (QGYP…SHPL), 1050 to 1129 (VRNA…KKQE), 1209 to 1240 (VEPS…QGQP), and 1322 to 1341 (KREA…DSAQ). A compositionally biased stretch (basic and acidic residues) spans 653 to 670 (ESMDCSRRGHGEEEQRLD). Residues 825 to 835 (IFNNHPNTHSA) are compositionally biased toward polar residues. The segment covering 840–852 (HPPEKVPNKEPKD) has biased composition (basic and acidic residues). The residue at position 854 (S854) is a Phosphoserine. Low complexity predominate over residues 884 to 894 (SEAPSESSSPS). Residues 895 to 904 (KPEKDEEAHQ) are compositionally biased toward basic and acidic residues. Residues 1053–1064 (AESTPESLVAKN) are compositionally biased toward polar residues. Positions 1094–1116 (KPKKAQKKARATPHANKRKKKPP) are enriched in basic residues. Composition is skewed to polar residues over residues 1214 to 1227 (SLPT…SGGQ) and 1326 to 1341 (QTSS…DSAQ). Zn(2+)-binding residues include C1371, C1373, C1430, H1456, and C1458. Residue R1499 participates in 2-oxoglutarate binding. The Zn(2+) site is built by C1509, C1511, C1527, and C1536. The segment at 1528-1541 (SWSMYFNGCKFGRS) is interaction with DNA. K1537 participates in a covalent cross-link: Glycyl lysine isopeptide (Lys-Gly) (interchain with G-Cter in ubiquitin). C1628 contacts Zn(2+). A 2-oxoglutarate-binding site is contributed by C1644. H1650 lines the Zn(2+) pocket. The Fe cation site is built by H1652 and D1654. Residue N1657 coordinates substrate. H1685 is a 2-oxoglutarate binding site. A compositionally biased stretch (basic residues) spans 1734 to 1743 (GKRAKMKQNH). 2 disordered regions span residues 1734-1760 (GKRA…ASST) and 1830-1901 (AAHP…LPQL). Over residues 1748–1760 (SHNTKSFSSASST) the composition is skewed to low complexity. A compositionally biased stretch (polar residues) spans 1850-1875 (TSPSEQLTSNQSNQQLPLLSNSQKLA). A compositionally biased stretch (basic and acidic residues) spans 1880–1895 (EDERHPEADEPQHPED). H1939 lines the Fe cation pocket. 1954-1956 (RVS) is a binding site for 2-oxoglutarate. Substrate is bound at residue 1960–1962 (YQH). Position 1970 (H1970) interacts with Zn(2+).

This sequence belongs to the TET family. As to quaternary structure, interacts with SIN3A; recruits the transcriptional co-repressor SIN3A to gene promoters. Interacts with HCFC1. Interacts (via C-terminus) with OGT. Found in a complex composed of at least SINHCAF, SIN3A, HDAC1, SAP30, RBBP4, OGT and TET1. Interacts with QSER1. Interacts with NONO (via DNA-binding domain); this interaction recruits TET1 to genomic loci. Interacts with FOXA2; this interaction may recruit TET1 to specific enhancers to preserve their unmethylated status and hence allowing gene expression. Interacts with RNF2. Directly interacts (via C-terminus) with the DCAF1 component of the CRL4(VprBP) E3 ubiquitin-protein ligase complex. In terms of assembly, interacts with UHRF1; this interaction induces the recruitment of TET1 to replicating heterochromatin. Interacts with DCAF1. Requires Fe(2+) as cofactor. It depends on Zn(2+) as a cofactor. Glycosylated. Interaction with OGT leads to GlcNAcylation. Post-translationally, monoubiquitinated by the DCX (DDB1-CUL4-X-box) E3 ubiquitin-protein ligase complex called CRL4(VprBP) or CUL4A-RBX1-DDB1-DCAF1/VPRBP complex. In terms of processing, monoubiquitinated by the DCX (DDB1-CUL4-X-box) E3 ubiquitin-protein ligase complex called CRL4(VprBP) or CUL4A-RBX1-DDB1-DCAF1/VPRBP complex; this modification promotes binding to DNA. As to expression, expressed in germinal vesicle (GV) stage and MII-stage oocytes and in early embryos. Also detected somatic tissues, including brain, liver and kidney, but at very low levels. Predominantly expressed in early embryos. Also expressed in embryonic stem cells and in primordial germ cells. Expressed in adult tissues, including brain cortex, cerebellum, heart, kidney, liver, muscle and spleen, although at much lower levels than isoform 2. In the brain, expressed at higher levels in glial cells than in neurons. Expressed in placenta. Expressed in the pituitary, most probably in thyrotropes. In terms of tissue distribution, preferentially expressed in differentiated cells, including in cerebral cortex, cerebellum and thymus. Also expressed in heart, kidney, liver, muscle and spleen at much higher levels than isoform 1. In the brain, expressed at higher levels in neurons than in glial cells. Expressed in the olfactory bulb and in the mammary gland.

It is found in the nucleus. It localises to the chromosome. The catalysed reaction is a 5-methyl-2'-deoxycytidine in DNA + 2-oxoglutarate + O2 = a 5-hydroxymethyl-2'-deoxycytidine in DNA + succinate + CO2. The enzyme catalyses a 5-hydroxymethyl-2'-deoxycytidine in DNA + 2-oxoglutarate + O2 = a 5-formyl-2'-deoxycytidine in DNA + succinate + CO2 + H2O. It carries out the reaction a 5-formyl-2'-deoxycytidine in DNA + 2-oxoglutarate + O2 = a 5-carboxyl-2'-deoxycytidine in DNA + succinate + CO2 + H(+). Functionally, dioxygenase that plays a key role in active DNA demethylation, by catalyzing the sequential oxidation of the modified genomic base 5-methylcytosine (5mC) into 5-hydroxymethylcytosine (5hmC), 5-formylcytosine (5fC), and 5-carboxylcytosine (5caC). In addition to its role in DNA demethylation, plays a more general role in chromatin regulation by recruiting histone modifying protein complexes to alter histone marks and chromatin accessibility, leading to both activation and repression of gene expression. Plays therefore a role in many biological processes, including stem cell maintenance, T- and B-cell development, inflammation regulation, iron homeostasis, neural activity or DNA repair. Involved in the balance between pluripotency and lineage commitment of cells it plays a role in embryonic stem cells maintenance and inner cell mass cell specification. Together with QSER1, plays an essential role in the protection and maintenance of transcriptional and developmental programs to inhibit the binding of DNMT3A/3B and therefore de novo methylation. May play a role in the pancreatic beta-cell specification during development. In this context, may function as an upstream epigenetic regulator of PAX4 presumably through direct recruitment by FOXA2 to a PAX4 enhancer to preserve its unmethylated status, thereby potentiating PAX4 expression to adopt beta-cell fate during endocrine lineage commitment. Under DNA hypomethylation conditions, such as in female meiotic germ cells, may induce epigenetic reprogramming of pericentromeric heterochromatin (PCH), the constitutive heterochromatin of pericentromeric regions. PCH forms chromocenters in the interphase nucleus and chromocenters cluster at the prophase of meiosis. In this context, may also be essential for chromocenter clustering in a catalytic activity-independent manner, possibly through the recruitment polycomb repressive complex 1 (PRC1) to the chromocenters. During embryonic development, may be required for normal meiotic progression in oocytes and meiotic gene activation. Binds preferentially to DNA containing cytidine-phosphate-guanosine (CpG) dinucleotides over CpH (H=A, T, and C), hemimethylated-CpG and hemimethylated-hydroxymethyl-CpG. Its function is as follows. Dioxygenase that plays a key role in active DNA demethylation. Binds to promoters, particularly to those with high CG content. In hippocampal neurons, isoform 1 regulates the expression of a unique subset of genes compared to isoform 2, although some overlap between both isoforms, hence differentially regulates excitatory synaptic transmission. In hippocampal neuron cell cultures, isoform 1 controls both miniature excitatory postsynaptic current amplitude and frequency. Isoform 1 may regulate genes involved in hippocampal-dependent memory, leading to positive regulation of memory, contrary to isoform 2 that may decrease memory. Dioxygenase that plays a key role in active DNA demethylation. As isoform 1, binds to promoters, particularly to those with high CG content, however displays reduced global chromatin affinity compared with isoform 1, leading to decreased global DNA demethylation compared with isoform 1. Contrary to isoform 1, isoform 2 localizes during S phase to sites of ongoing DNA replication in heterochromatin, causing a significant de novo 5hmC formation, globally, and more so in heterochromatin, including LINE 1 interspersed DNA repeats leading to their activation. In hippocampal neurons, isoform 2 regulates the expression of a unique subset of genes compared with isoform 1, although some overlap between both isoforms, hence differentially regulating excitatory synaptic transmission. In hippocampal neuron cell cultures, isoform 2 controls miniature excitatory postsynaptic current frequency, but not amplitude. Isoform 2 may regulate genes involved in hippocampal-dependent memory, leading to negative regulation of memory, contrary to isoform 1 that may improve memory. In immature and partially differentiated gonadotrope cells, represses luteinizing hormone gene LHB expression directly and does not catalyze 5hmC at the gene promoter. In Mus musculus (Mouse), this protein is Methylcytosine dioxygenase TET1 (Tet1).